The chain runs to 209 residues: Probable nicotinate-nucleotide adenylyltransferase (209 aa).

Belongs to the NadD family.

It catalyses the reaction nicotinate beta-D-ribonucleotide + ATP + H(+) = deamido-NAD(+) + diphosphate. It functions in the pathway cofactor biosynthesis; NAD(+) biosynthesis; deamido-NAD(+) from nicotinate D-ribonucleotide: step 1/1. Functionally, catalyzes the reversible adenylation of nicotinate mononucleotide (NaMN) to nicotinic acid adenine dinucleotide (NaAD). In Streptococcus pneumoniae serotype 4 (strain ATCC BAA-334 / TIGR4), this protein is Probable nicotinate-nucleotide adenylyltransferase.